Consider the following 452-residue polypeptide: GATA-binding factor 2 (452 aa).

The segment at 130 to 182 (GGSLYPGTGSSACPSSSHSSPHLFGFPPTPPKDVSPDPGPASPPSSSRLEDKD) is disordered. Positions 139 to 151 (SSACPSSSHSSPH) are enriched in low complexity. The segment covering 156–172 (PPTPPKDVSPDPGPASP) has biased composition (pro residues). 2 consecutive GATA-type zinc fingers follow at residues 267-291 (CVNC…CNAC) and 321-345 (CANC…CNAC). A compositionally biased stretch (polar residues) spans 426 to 438 (QTPTPIHPSSSLS). The tract at residues 426–452 (QTPTPIHPSSSLSFGHPHHSSMVTAMG) is disordered.

In terms of tissue distribution, expressed in the developing ventral blood island, and in the embryonic nervous system.

Its subcellular location is the nucleus. This chain is GATA-binding factor 2 (gata2), found in Xenopus laevis (African clawed frog).